Reading from the N-terminus, the 264-residue chain is Myozenin-2 (264 aa).

At arginine 53 the chain carries Omega-N-methylarginine. The segment at 90–135 is disordered; sequence GRVDGSNLEGGSQQGPSTPPNTPDPRSPPNPENIAPGYSGPLKEIP. Serine 101 bears the Phosphoserine mark. The segment covering 106 to 120 has biased composition (pro residues); the sequence is STPPNTPDPRSPPNP. A phosphothreonine mark is found at threonine 107 and threonine 111. Phosphoserine is present on serine 116.

The protein belongs to the myozenin family. As to quaternary structure, interacts via its C-terminus with spectrin repeats 3 and 4 of ACTN2. Interacts with ACTN1, LDB3, MYOT and PPP3CA. As to expression, expressed specifically in heart and skeletal muscle. In skeletal muscle, localized to the soleus and plantaris muscles, which are predominantly composed of slow-twitch fibers.

The protein localises to the cytoplasm. The protein resides in the myofibril. Its subcellular location is the sarcomere. It is found in the z line. Its function is as follows. Myozenins may serve as intracellular binding proteins involved in linking Z line proteins such as alpha-actinin, gamma-filamin, TCAP/telethonin, LDB3/ZASP and localizing calcineurin signaling to the sarcomere. Plays an important role in the modulation of calcineurin signaling. May play a role in myofibrillogenesis. This chain is Myozenin-2, found in Mus musculus (Mouse).